A 141-amino-acid chain; its full sequence is Cell division protein SepF (141 aa).

The protein belongs to the SepF family. As to quaternary structure, homodimer. Interacts with FtsZ.

The protein localises to the cytoplasm. Functionally, cell division protein that is part of the divisome complex and is recruited early to the Z-ring. Probably stimulates Z-ring formation, perhaps through the cross-linking of FtsZ protofilaments. Its function overlaps with FtsA. The protein is Cell division protein SepF of Anoxybacillus flavithermus (strain DSM 21510 / WK1).